The sequence spans 326 residues: Putative ribose-phosphate pyrophosphokinase 2 (326 aa).

Residues 43 to 45 (DGE) and 102 to 103 (RQ) contribute to the ATP site. Mg(2+) is bound at residue His-136. Residues Asp-225 and 229–233 (NTGKT) contribute to the D-ribose 5-phosphate site.

In terms of assembly, homohexamer. The cofactor is Mg(2+).

The protein resides in the cytoplasm. It carries out the reaction D-ribose 5-phosphate + ATP = 5-phospho-alpha-D-ribose 1-diphosphate + AMP + H(+). Its pathway is metabolic intermediate biosynthesis; 5-phospho-alpha-D-ribose 1-diphosphate biosynthesis; 5-phospho-alpha-D-ribose 1-diphosphate from D-ribose 5-phosphate (route I): step 1/1. Functionally, involved in the biosynthesis of the central metabolite phospho-alpha-D-ribosyl-1-pyrophosphate (PRPP) via the transfer of pyrophosphoryl group from ATP to 1-hydroxyl of ribose-5-phosphate (Rib-5-P). The sequence is that of Putative ribose-phosphate pyrophosphokinase 2 from Streptococcus pyogenes serotype M6 (strain ATCC BAA-946 / MGAS10394).